An 874-amino-acid polypeptide reads, in one-letter code: Alanine--tRNA ligase (874 aa).

The Zn(2+) site is built by histidine 563, histidine 567, cysteine 665, and histidine 669.

This sequence belongs to the class-II aminoacyl-tRNA synthetase family. It depends on Zn(2+) as a cofactor.

It localises to the cytoplasm. The catalysed reaction is tRNA(Ala) + L-alanine + ATP = L-alanyl-tRNA(Ala) + AMP + diphosphate. Its function is as follows. Catalyzes the attachment of alanine to tRNA(Ala) in a two-step reaction: alanine is first activated by ATP to form Ala-AMP and then transferred to the acceptor end of tRNA(Ala). Also edits incorrectly charged Ser-tRNA(Ala) and Gly-tRNA(Ala) via its editing domain. This is Alanine--tRNA ligase from Haemophilus influenzae (strain 86-028NP).